We begin with the raw amino-acid sequence, 146 residues long: Hemoglobin subunit beta (146 aa).

Blocked amino end (Thr) is present on T1. In terms of domain architecture, Globin spans 2 to 146; it reads HWTAEERHYI…VAHALTLQYH (145 aa). Heme b is bound by residues H63 and H92.

Belongs to the globin family. In terms of assembly, heterotetramer of two alpha chains and two beta chains. In terms of tissue distribution, red blood cells.

Involved in oxygen transport from the lung to the various peripheral tissues. The chain is Hemoglobin subunit beta (HBB) from Caretta caretta (Loggerhead sea turtle).